Consider the following 228-residue polypeptide: Endonuclease V (228 aa).

Mg(2+) contacts are provided by D43 and D109.

The protein belongs to the endonuclease V family. Mg(2+) is required as a cofactor.

The protein resides in the cytoplasm. The catalysed reaction is Endonucleolytic cleavage at apurinic or apyrimidinic sites to products with a 5'-phosphate.. Its function is as follows. DNA repair enzyme involved in the repair of deaminated bases. Selectively cleaves double-stranded DNA at the second phosphodiester bond 3' to a deoxyinosine leaving behind the intact lesion on the nicked DNA. This chain is Endonuclease V, found in Dictyoglomus turgidum (strain DSM 6724 / Z-1310).